Here is a 388-residue protein sequence, read N- to C-terminus: MSEDYRGHHGITGLATKAIHAGYRPDPATGAVNVPIYASSTFAQDGVGELRGGFEYARTGNPMRAALEASLATVEEGVFARAFSSGMAASDCALRVMLRPGDHVIIPDDVYGGTFRLIDKVFTQWNVDYTPVPLSDLDAVRAAITSRTRLIWVETPTNPLLSIADITSIGELGKKHSVKVLVDNTFASPALQQPLMLGADVVLHSTTKYIGGHSDVVGGALVTNDEELDQAFGFLQNGAGAVPSPFDAYLTMRGLKTLVLRMQRHNENAITVAEFLAGHPSVSAVLYPGLPSHPGHEVAARQMRGFGGMVSLRMRAGRLAAQDLCARTKVFTLAESLGGVESLIEQPSAMTHASTTGSQLEVPDDLVRLSVGIEDVGDLLCDLKQALN.

Lysine 208 carries the post-translational modification N6-(pyridoxal phosphate)lysine.

The protein belongs to the trans-sulfuration enzymes family. Homotetramer. It depends on pyridoxal 5'-phosphate as a cofactor.

The protein resides in the cytoplasm. The catalysed reaction is O-succinyl-L-homoserine + L-cysteine = L,L-cystathionine + succinate + H(+). In terms of biological role, catalyzes the formation of L-cystathionine from O-succinyl-L-homoserine (OSHS) and L-cysteine, via a gamma-replacement reaction. In the absence of thiol, catalyzes gamma-elimination to form 2-oxobutanoate, succinate and ammonia. The sequence is that of Cystathionine gamma-synthase (metB) from Mycobacterium leprae (strain TN).